The chain runs to 162 residues: Proepiregulin (162 aa).

The signal sequence occupies residues 1–22; sequence METFPAAWVLALLCLGSHLLQA. Positions 23–55 are excised as a propeptide; it reads VISTTVIPSCIPEESEDNCTALVQMEDDPRVAQ. Residue N40 is glycosylated (N-linked (GlcNAc...) asparagine). The region spanning 57 to 97 is the EGF-like domain; the sequence is LITKCSSDMDGYCLHGHCIYLVDMSEKYCRCEVGYTGLRCE. Cystine bridges form between C61-C74, C69-C85, and C87-C96. The propeptide at 102–162 is removed in mature form; the sequence is TVHQPLSREY…TSGGPGLPQV (61 aa). The chain crosses the membrane as a helical span at residues 113-133; the sequence is ALTVILVFLFLIVTAGSMYYF.

Interacts with EGFR and ERBB4.

The protein resides in the secreted. It localises to the extracellular space. The protein localises to the cell membrane. Ligand of the EGF receptor/EGFR and ERBB4. Stimulates EGFR and ERBB4 tyrosine phosphorylation. Contributes to inflammation, wound healing, tissue repair, and oocyte maturation by regulating angiogenesis and vascular remodeling and by stimulating cell proliferation. In Rattus norvegicus (Rat), this protein is Proepiregulin (Ereg).